We begin with the raw amino-acid sequence, 277 residues long: Large ribosomal subunit protein uL2 (277 aa).

A disordered region spans residues 212–277; the sequence is RWRGKRPHVR…KFIVRGRKSK (66 aa). Over residues 254 to 277 the composition is skewed to basic residues; sequence TAGKKTRDKKKASTKFIVRGRKSK.

Belongs to the universal ribosomal protein uL2 family. As to quaternary structure, part of the 50S ribosomal subunit. Forms a bridge to the 30S subunit in the 70S ribosome.

One of the primary rRNA binding proteins. Required for association of the 30S and 50S subunits to form the 70S ribosome, for tRNA binding and peptide bond formation. It has been suggested to have peptidyltransferase activity; this is somewhat controversial. Makes several contacts with the 16S rRNA in the 70S ribosome. This Leuconostoc mesenteroides subsp. mesenteroides (strain ATCC 8293 / DSM 20343 / BCRC 11652 / CCM 1803 / JCM 6124 / NCDO 523 / NBRC 100496 / NCIMB 8023 / NCTC 12954 / NRRL B-1118 / 37Y) protein is Large ribosomal subunit protein uL2.